The following is a 536-amino-acid chain: Phosphoenolpyruvate carboxykinase (ATP) (536 aa).

R61, Y195, and K201 together coordinate substrate. Residues K201, H220, and 236 to 244 each bind ATP; that span reads GLSGTGKTT. 2 residues coordinate Mn(2+): K201 and H220. D257 provides a ligand contact to Mn(2+). Residues E285, R322, and T447 each coordinate ATP. R322 lines the substrate pocket.

Belongs to the phosphoenolpyruvate carboxykinase (ATP) family. Mn(2+) serves as cofactor.

Its subcellular location is the cytoplasm. It carries out the reaction oxaloacetate + ATP = phosphoenolpyruvate + ADP + CO2. Its pathway is carbohydrate biosynthesis; gluconeogenesis. Its function is as follows. Involved in the gluconeogenesis. Catalyzes the conversion of oxaloacetate (OAA) to phosphoenolpyruvate (PEP) through direct phosphoryl transfer between the nucleoside triphosphate and OAA. In Chelativorans sp. (strain BNC1), this protein is Phosphoenolpyruvate carboxykinase (ATP).